The following is an 87-amino-acid chain: Exodeoxyribonuclease 7 small subunit (87 aa).

The protein belongs to the XseB family. As to quaternary structure, heterooligomer composed of large and small subunits.

It is found in the cytoplasm. It catalyses the reaction Exonucleolytic cleavage in either 5'- to 3'- or 3'- to 5'-direction to yield nucleoside 5'-phosphates.. Its function is as follows. Bidirectionally degrades single-stranded DNA into large acid-insoluble oligonucleotides, which are then degraded further into small acid-soluble oligonucleotides. This is Exodeoxyribonuclease 7 small subunit from Serratia proteamaculans (strain 568).